Consider the following 178-residue polypeptide: Large ribosomal subunit protein uL6 (178 aa).

The protein belongs to the universal ribosomal protein uL6 family. Part of the 50S ribosomal subunit.

Functionally, this protein binds to the 23S rRNA, and is important in its secondary structure. It is located near the subunit interface in the base of the L7/L12 stalk, and near the tRNA binding site of the peptidyltransferase center. The sequence is that of Large ribosomal subunit protein uL6 from Helicobacter pylori (strain J99 / ATCC 700824) (Campylobacter pylori J99).